The primary structure comprises 369 residues: tRNA 2-selenouridine synthase (369 aa).

The 124-residue stretch at 15 to 138 (MLSGHPMMDV…MRQYLIEVID (124 aa)) folds into the Rhodanese domain. The S-selanylcysteine intermediate role is filled by Cys98.

It belongs to the SelU family. Monomer.

It carries out the reaction 5-methylaminomethyl-2-thiouridine(34) in tRNA + selenophosphate + (2E)-geranyl diphosphate + H2O + H(+) = 5-methylaminomethyl-2-selenouridine(34) in tRNA + (2E)-thiogeraniol + phosphate + diphosphate. It catalyses the reaction 5-methylaminomethyl-2-thiouridine(34) in tRNA + (2E)-geranyl diphosphate = 5-methylaminomethyl-S-(2E)-geranyl-thiouridine(34) in tRNA + diphosphate. The catalysed reaction is 5-methylaminomethyl-S-(2E)-geranyl-thiouridine(34) in tRNA + selenophosphate + H(+) = 5-methylaminomethyl-2-(Se-phospho)selenouridine(34) in tRNA + (2E)-thiogeraniol. The enzyme catalyses 5-methylaminomethyl-2-(Se-phospho)selenouridine(34) in tRNA + H2O = 5-methylaminomethyl-2-selenouridine(34) in tRNA + phosphate. In terms of biological role, involved in the post-transcriptional modification of the uridine at the wobble position (U34) of tRNA(Lys), tRNA(Glu) and tRNA(Gln). Catalyzes the conversion of 2-thiouridine (S2U-RNA) to 2-selenouridine (Se2U-RNA). Acts in a two-step process involving geranylation of 2-thiouridine (S2U) to S-geranyl-2-thiouridine (geS2U) and subsequent selenation of the latter derivative to 2-selenouridine (Se2U) in the tRNA chain. The protein is tRNA 2-selenouridine synthase of Shewanella sediminis (strain HAW-EB3).